A 983-amino-acid polypeptide reads, in one-letter code: Ephrin type-A receptor 3 (983 aa).

Residues 1 to 19 (MDRRRLPLLLLCAALGSAG) form the signal peptide. The Extracellular portion of the chain corresponds to 20–540 (RLSARPGNEV…SFSISSENSQ (521 aa)). The 179-residue stretch at 28–206 (EVNLLDSKTI…YFKKCPFTVK (179 aa)) folds into the Eph LBD domain. N-linked (GlcNAc...) asparagine glycosylation is found at Asn-231, Asn-336, Asn-390, Asn-403, and Asn-492. Fibronectin type-III domains are found at residues 324–434 (PPSA…TNQA) and 435–530 (APSP…TSPD). The helical transmembrane segment at 541–564 (VVMIAISAAVAIILLTVVVYVLIG) threads the bilayer. The Cytoplasmic portion of the chain corresponds to 565-983 (RFCGYKKSKH…THTKNSPVPV (419 aa)). Phosphotyrosine; by autocatalysis occurs at positions 596 and 602. The 262-residue stretch at 621–882 (ISIDKVVGAG…QIVSILDKLI (262 aa)) folds into the Protein kinase domain. ATP contacts are provided by residues 628–633 (GAGEFG), Lys-653, and 700–706 (EYMENGS). At Tyr-701 the chain carries Phosphotyrosine; by autocatalysis. Residue Asp-746 is the Proton acceptor of the active site. Position 750 to 751 (750 to 751 (RN)) interacts with ATP. At Tyr-779 the chain carries Phosphotyrosine; by autocatalysis. The region spanning 911–975 (SAFRTAGDWL…VSSIKTLETH (65 aa)) is the SAM domain. Positions 981 to 983 (VPV) match the PDZ-binding motif.

This sequence belongs to the protein kinase superfamily. Tyr protein kinase family. Ephrin receptor subfamily. Heterotetramer upon binding of the ligand. The heterotetramer is composed of an ephrin dimer and a receptor dimer. Oligomerization is probably required to induce biological responses. Post-translationally, autophosphorylates upon activation by EFNA5. In terms of tissue distribution, highly expressed in the developing brain and embryonic tissues. In adult, the greatest levels of expression occur in the brain. It is expressed in a graded manner across the retina with the highest expression at its temporal pole. Detectable in all other adult tissues examined, except the liver.

The protein localises to the cell membrane. It carries out the reaction L-tyrosyl-[protein] + ATP = O-phospho-L-tyrosyl-[protein] + ADP + H(+). Receptor tyrosine kinase which binds promiscuously membrane-bound ephrin family ligands residing on adjacent cells, leading to contact-dependent bidirectional signaling into neighboring cells. The signaling pathway downstream of the receptor is referred to as forward signaling while the signaling pathway downstream of the ephrin ligand is referred to as reverse signaling. Highly promiscuous for ephrin-A ligands it binds preferentially EFNA5. Upon activation by EFNA5 regulates cell-cell adhesion, cytoskeletal organization and cell migration. Plays a role in cardiac cells migration and differentiation probably through activation by EFNA1. Involved in the retinotectal mapping of neurons. May also control the segregation but not the guidance of motor and sensory axons during neuromuscular circuit development. This is Ephrin type-A receptor 3 (EPHA3) from Gallus gallus (Chicken).